Consider the following 394-residue polypeptide: Elongation factor Tu (394 aa).

Positions 10-204 (KPHVNVGTIG…ALDTYIPEPE (195 aa)) constitute a tr-type G domain. A G1 region spans residues 19–26 (GHVDHGKT). 19–26 (GHVDHGKT) serves as a coordination point for GTP. Threonine 26 serves as a coordination point for Mg(2+). The segment at 60–64 (GITIN) is G2. Residues 81 to 84 (DCPG) are G3. Residues 81-85 (DCPGH) and 136-139 (NKCD) each bind GTP. The tract at residues 136-139 (NKCD) is G4. The tract at residues 174-176 (SAL) is G5.

This sequence belongs to the TRAFAC class translation factor GTPase superfamily. Classic translation factor GTPase family. EF-Tu/EF-1A subfamily. Monomer.

The protein localises to the cytoplasm. The catalysed reaction is GTP + H2O = GDP + phosphate + H(+). In terms of biological role, GTP hydrolase that promotes the GTP-dependent binding of aminoacyl-tRNA to the A-site of ribosomes during protein biosynthesis. In Shewanella pealeana (strain ATCC 700345 / ANG-SQ1), this protein is Elongation factor Tu.